The following is a 243-amino-acid chain: Triosephosphate isomerase (243 aa).

9–11 serves as a coordination point for substrate; that stretch reads NWK. Residue His96 is the Electrophile of the active site. Glu165 (proton acceptor) is an active-site residue. Substrate is bound by residues Gly171, Ser204, and 225 to 226; that span reads GG.

Belongs to the triosephosphate isomerase family. Homodimer.

It localises to the cytoplasm. The catalysed reaction is D-glyceraldehyde 3-phosphate = dihydroxyacetone phosphate. The protein operates within carbohydrate biosynthesis; gluconeogenesis. It participates in carbohydrate degradation; glycolysis; D-glyceraldehyde 3-phosphate from glycerone phosphate: step 1/1. In terms of biological role, involved in the gluconeogenesis. Catalyzes stereospecifically the conversion of dihydroxyacetone phosphate (DHAP) to D-glyceraldehyde-3-phosphate (G3P). The sequence is that of Triosephosphate isomerase from Prochlorococcus marinus (strain MIT 9211).